Here is a 440-residue protein sequence, read N- to C-terminus: Cell division protein FtsA (440 aa).

It belongs to the FtsA/MreB family. As to quaternary structure, self-interacts. Interacts with FtsZ.

It is found in the cell membrane. Cell division protein that is involved in the assembly of the Z ring. May serve as a membrane anchor for the Z ring. The polypeptide is Cell division protein FtsA (Enterococcus faecalis (strain ATCC 700802 / V583)).